Consider the following 211-residue polypeptide: ATP phosphoribosyltransferase (211 aa).

It belongs to the ATP phosphoribosyltransferase family. Short subfamily. As to quaternary structure, heteromultimer composed of HisG and HisZ subunits.

The protein localises to the cytoplasm. The enzyme catalyses 1-(5-phospho-beta-D-ribosyl)-ATP + diphosphate = 5-phospho-alpha-D-ribose 1-diphosphate + ATP. The protein operates within amino-acid biosynthesis; L-histidine biosynthesis; L-histidine from 5-phospho-alpha-D-ribose 1-diphosphate: step 1/9. Catalyzes the condensation of ATP and 5-phosphoribose 1-diphosphate to form N'-(5'-phosphoribosyl)-ATP (PR-ATP). Has a crucial role in the pathway because the rate of histidine biosynthesis seems to be controlled primarily by regulation of HisG enzymatic activity. The chain is ATP phosphoribosyltransferase from Pseudomonas syringae pv. syringae (strain B728a).